The primary structure comprises 1320 residues: Sister chromatid cohesion protein PDS5 homolog A (1320 aa).

HEAT repeat units lie at residues 156–195 (NEIF…EGDG), 272–310 (PLLL…AKDS), 388–426 (NLVN…KYCL), 709–747 (PQIR…NKEV), and 990–1028 (SLLP…CLWF). The span at 1158-1179 (TFTSETGSNASTNSQPSSPATN) shows a compositional bias: polar residues. Positions 1158 to 1320 (TFTSETGSNA…APQRQIDLQR (163 aa)) are disordered. The span at 1180-1194 (KSRDVSSEVGARENE) shows a compositional bias: basic and acidic residues. Positions 1225-1241 (GTENSVSSNPSAGSQPP) are enriched in polar residues. Over residues 1255–1267 (AGAATQEKEAGAT) the composition is skewed to low complexity. The segment covering 1283–1293 (QDPSSTASTDA) has biased composition (polar residues). Over residues 1294–1309 (LSDKTPKQQKEAEPKR) the composition is skewed to basic and acidic residues.

The protein belongs to the PDS5 family. In terms of assembly, interacts with the cohesin complex. Binds chromatin in a cohesin-dependent manner.

The protein resides in the nucleus. May regulate sister chromatid cohesion during mitosis and couple it to DNA replication. This Danio rerio (Zebrafish) protein is Sister chromatid cohesion protein PDS5 homolog A.